Reading from the N-terminus, the 1190-residue chain is DNA-directed RNA polymerase subunit beta (1190 aa).

Belongs to the RNA polymerase beta chain family. As to quaternary structure, the RNAP catalytic core consists of 2 alpha, 1 beta, 1 beta' and 1 omega subunit. When a sigma factor is associated with the core the holoenzyme is formed, which can initiate transcription.

The catalysed reaction is RNA(n) + a ribonucleoside 5'-triphosphate = RNA(n+1) + diphosphate. Functionally, DNA-dependent RNA polymerase catalyzes the transcription of DNA into RNA using the four ribonucleoside triphosphates as substrates. The protein is DNA-directed RNA polymerase subunit beta of Geobacillus thermodenitrificans (strain NG80-2).